The primary structure comprises 90 residues: uncharacterized protein (90 aa).

Residues 15 to 34 (HVLAISTFIATAAVASYFTT) traverse the membrane as a helical segment. Residues 34–65 (TKPKTKNEGKNSSALSQQKSGESSNSDAMGKD) are disordered. A compositionally biased stretch (polar residues) spans 43-60 (KNSSALSQQKSGESSNSD). An N-linked (GlcNAc...) asparagine glycan is attached at N44.

It localises to the mitochondrion membrane. This is an uncharacterized protein from Saccharomyces cerevisiae (strain ATCC 204508 / S288c) (Baker's yeast).